The following is a 266-amino-acid chain: Cyclin-C (266 aa).

The region spanning 47–151 (IIQVLGEQLK…LLENLDCCLI (105 aa)) is the Cyclin N-terminal domain.

It belongs to the cyclin family. Cyclin C subfamily. In terms of assembly, component of the Cdk8 module of the Mediator complex.

It is found in the nucleus. Component of the Mediator complex, a coactivator involved in regulated gene transcription of nearly all RNA polymerase II-dependent genes. Mediator functions as a bridge to convey information from gene-specific regulatory proteins to the basal RNA polymerase II transcription machinery. Mediator is recruited to promoters by direct interactions with regulatory proteins and serves as a scaffold for the assembly of a functional preinitiation complex with RNA polymerase II and the general transcription factors. Binds to and activates cyclin-dependent kinase Cdk8 that phosphorylates the CTD (C-terminal domain) of the large subunit of RNA polymerase II (RNAp II), which may inhibit the formation of a transcription initiation complex. The polypeptide is Cyclin-C (CycC) (Anopheles gambiae (African malaria mosquito)).